We begin with the raw amino-acid sequence, 118 residues long: Non-specific lipid-transfer protein D (118 aa).

An N-terminal signal peptide occupies residues 1–25 (MAGLMKLACLIFACMIVAGPITSNA). Intrachain disulfides connect cysteine 29–cysteine 77, cysteine 39–cysteine 54, cysteine 55–cysteine 100, and cysteine 75–cysteine 114.

It belongs to the plant LTP family.

Its function is as follows. Plant non-specific lipid-transfer proteins transfer phospholipids as well as galactolipids across membranes. May play a role in wax or cutin deposition in the cell walls of expanding epidermal cells and certain secretory tissues. In Brassica oleracea var. italica (Broccoli), this protein is Non-specific lipid-transfer protein D (WAX9D).